The following is a 398-amino-acid chain: tRNA-specific 2-thiouridylase MnmA (398 aa).

Residues 19 to 26 (AMSGGVDS) and Leu-45 each bind ATP. Cys-113 functions as the Nucleophile in the catalytic mechanism. A disulfide bridge connects residues Cys-113 and Cys-210. Residue Gly-137 coordinates ATP. An interaction with tRNA region spans residues 160–162 (RDQ). Residue Cys-210 is the Cysteine persulfide intermediate of the active site.

It belongs to the MnmA/TRMU family.

The protein resides in the cytoplasm. The enzyme catalyses S-sulfanyl-L-cysteinyl-[protein] + uridine(34) in tRNA + AH2 + ATP = 2-thiouridine(34) in tRNA + L-cysteinyl-[protein] + A + AMP + diphosphate + H(+). Catalyzes the 2-thiolation of uridine at the wobble position (U34) of tRNA, leading to the formation of s(2)U34. The protein is tRNA-specific 2-thiouridylase MnmA of Rhodopseudomonas palustris (strain HaA2).